A 142-amino-acid chain; its full sequence is Large ribosomal subunit protein uL11 (142 aa).

It belongs to the universal ribosomal protein uL11 family. As to quaternary structure, part of the ribosomal stalk of the 50S ribosomal subunit. Interacts with L10 and the large rRNA to form the base of the stalk. L10 forms an elongated spine to which L12 dimers bind in a sequential fashion forming a multimeric L10(L12)X complex. Post-translationally, one or more lysine residues are methylated.

In terms of biological role, forms part of the ribosomal stalk which helps the ribosome interact with GTP-bound translation factors. The chain is Large ribosomal subunit protein uL11 from Sinorhizobium fredii (strain NBRC 101917 / NGR234).